The primary structure comprises 349 residues: NADH-quinone oxidoreductase subunit H (349 aa).

8 helical membrane-spanning segments follow: residues 11–31, 83–103, 116–136, 162–182, 200–220, 252–272, 288–308, and 323–343; these read FPLLIIVGKTLLLLVILLLLV, GVFLLAPFVSATLALSTWAVI, VGLLYILAISSLEVYGVIMGG, IGFVLVTVILVSGSLDLTTIV, FLDWNWLVLFPMFIIFFISAL, LFFLGEYVAIVLMCALTTILF, VPGIIWFVLKVCFVFFWFAMV, and LGWKVFLPLSLAMVVITAAFL.

The protein belongs to the complex I subunit 1 family. As to quaternary structure, NDH-1 is composed of 14 different subunits. Subunits NuoA, H, J, K, L, M, N constitute the membrane sector of the complex.

Its subcellular location is the cell inner membrane. It carries out the reaction a quinone + NADH + 5 H(+)(in) = a quinol + NAD(+) + 4 H(+)(out). Functionally, NDH-1 shuttles electrons from NADH, via FMN and iron-sulfur (Fe-S) centers, to quinones in the respiratory chain. The immediate electron acceptor for the enzyme in this species is believed to be ubiquinone. Couples the redox reaction to proton translocation (for every two electrons transferred, four hydrogen ions are translocated across the cytoplasmic membrane), and thus conserves the redox energy in a proton gradient. This subunit may bind ubiquinone. This chain is NADH-quinone oxidoreductase subunit H, found in Bartonella henselae (strain ATCC 49882 / DSM 28221 / CCUG 30454 / Houston 1) (Rochalimaea henselae).